Consider the following 129-residue polypeptide: Small ribosomal subunit protein eS8 (129 aa).

The interval 1 to 29 is disordered; that stretch reads MSVWQGRSRRKPTGGLYRPARKKRKYEMG.

It belongs to the eukaryotic ribosomal protein eS8 family. In terms of assembly, part of the 30S ribosomal subunit.

The sequence is that of Small ribosomal subunit protein eS8 (rps8e) from Methanocaldococcus jannaschii (strain ATCC 43067 / DSM 2661 / JAL-1 / JCM 10045 / NBRC 100440) (Methanococcus jannaschii).